A 312-amino-acid chain; its full sequence is Gamma-soluble NSF attachment protein (312 aa).

Residues Lys281–Cys312 form a disordered region. Ser284 is subject to Phosphoserine. Thr287 is modified (phosphothreonine). Residues Ala300 to Cys312 show a composition bias toward acidic residues. Ser308 carries the post-translational modification Phosphoserine.

It belongs to the SNAP family. Interacts with RAB11FIP5. Interacts with VTI1A. In terms of tissue distribution, abundantly expressed in the heart, liver and kidneys with lower expression in the brain, spleen, lung, muscle and testes.

Its subcellular location is the membrane. It localises to the golgi apparatus. In terms of biological role, required for vesicular transport between the endoplasmic reticulum and the Golgi apparatus. This Mus musculus (Mouse) protein is Gamma-soluble NSF attachment protein.